Consider the following 533-residue polypeptide: Peptide chain release factor 3 (533 aa).

Residues 11–284 (RRRRTFAIIS…ALVGLSPEPL (274 aa)) enclose the tr-type G domain. GTP is bound by residues 20–27 (SHPDAGKT), 92–96 (DTPGH), and 146–149 (NKLD).

It belongs to the TRAFAC class translation factor GTPase superfamily. Classic translation factor GTPase family. PrfC subfamily.

It is found in the cytoplasm. In terms of biological role, increases the formation of ribosomal termination complexes and stimulates activities of RF-1 and RF-2. It binds guanine nucleotides and has strong preference for UGA stop codons. It may interact directly with the ribosome. The stimulation of RF-1 and RF-2 is significantly reduced by GTP and GDP, but not by GMP. The protein is Peptide chain release factor 3 of Ralstonia nicotianae (strain ATCC BAA-1114 / GMI1000) (Ralstonia solanacearum).